Consider the following 240-residue polypeptide: Transcriptional activator protein VanR (240 aa).

Residues 169 to 234 (DAKPRAVLTA…QAITKAILGG (66 aa)) enclose the HTH luxR-type domain. Positions 193–212 (AWEIATIINTSERTVKFHFS) form a DNA-binding region, H-T-H motif.

This sequence belongs to the autoinducer-regulated transcriptional regulatory protein family.

Functionally, probable transcriptional activator. Binds to autoinducer molecule ODHL. This Vibrio anguillarum (Listonella anguillarum) protein is Transcriptional activator protein VanR (vanR).